A 155-amino-acid polypeptide reads, in one-letter code: MRRRRAEVRKIAPDPVYSDILVAKLVNRIMWDGKKAVAQKIVYRSFEYIQEKSGKDPLEVFQKAIENVRPVLEVRPRRVGGATYQVPVEVQEPRKTSLALRWIVAAARAKKGKPMYVRLAEEILASYQGTGTAMKKKEDVHKMAEANRAFAHLRW.

Belongs to the universal ribosomal protein uS7 family. Part of the 30S ribosomal subunit. Contacts proteins S9 and S11.

Its function is as follows. One of the primary rRNA binding proteins, it binds directly to 16S rRNA where it nucleates assembly of the head domain of the 30S subunit. Is located at the subunit interface close to the decoding center, probably blocks exit of the E-site tRNA. This chain is Small ribosomal subunit protein uS7, found in Pseudothermotoga lettingae (strain ATCC BAA-301 / DSM 14385 / NBRC 107922 / TMO) (Thermotoga lettingae).